A 298-amino-acid polypeptide reads, in one-letter code: Cyanophycinase (298 aa).

Active-site charge relay system residues include S155, E173, and H197.

Belongs to the peptidase S51 family.

The enzyme catalyses [L-4-(L-arginin-2-N-yl)aspartate](n) + H2O = [L-4-(L-arginin-2-N-yl)aspartate](n-1) + L-4-(L-arginin-2-N-yl)aspartate. Its function is as follows. Exopeptidase that catalyzes the hydrolytic cleavage of multi-L-arginyl-poly-L-aspartic acid (cyanophycin; a water-insoluble reserve polymer) into aspartate-arginine dipeptides. In Trichormus variabilis (strain ATCC 29413 / PCC 7937) (Anabaena variabilis), this protein is Cyanophycinase (cphB).